The sequence spans 219 residues: RING finger protein nenya (219 aa).

The segment at 6–48 (CNKCFRRRNVEPTLIFHMTQCQHVLCASCLSESSTDKKCPLCK) adopts an RING-type zinc-finger fold. The interval 161–181 (NQARGLRPRTPSVTTSDNTQS) is disordered.

May interact with itself, with narya and vilya through its RING-type zinc finger.

In terms of biological role, required for the formation of DNA double-strand breaks together with narya and vilya during the meiotic recombination process. Plays a redundant role with narya in chromosome segregation during female meiosis. The sequence is that of RING finger protein nenya from Drosophila melanogaster (Fruit fly).